Consider the following 68-residue polypeptide: Large ribosomal subunit protein uL29 (68 aa).

It belongs to the universal ribosomal protein uL29 family.

This chain is Large ribosomal subunit protein uL29, found in Limosilactobacillus reuteri (strain DSM 20016) (Lactobacillus reuteri).